A 203-amino-acid polypeptide reads, in one-letter code: Inositol diphosphatase DSP3 (203 aa).

One can recognise a Tyrosine-protein phosphatase domain in the interval 20 to 169 (NFSMVEDGIY…FDIVSLRQCL (150 aa)). The tract at residues 76–88 (FGIEGKTDPPTPM) is WPD loop important for active site topology. The Phosphocysteine intermediate role is filled by cysteine 112.

This sequence belongs to the protein-tyrosine phosphatase family. Atypical dual-specificity phosphatase Siw14-like subfamily. As to quaternary structure, interacts with FLZ1. As to expression, highly expressed in roots, stems and flowers. Expressed at low levels in leaves and siliques.

The protein localises to the nucleus. The enzyme catalyses 5-diphospho-1D-myo-inositol 1,2,3,4,6-pentakisphosphate + H2O = 1D-myo-inositol hexakisphosphate + phosphate + H(+). The catalysed reaction is 1,5-bis(diphospho)-1D-myo-inositol 2,3,4,6-tetrakisphosphate + H2O = 1-diphospho-1D-myo-inositol 2,3,4,5,6-pentakisphosphate + phosphate + 2 H(+). It carries out the reaction 3,5-bis(diphospho)-1D-myo-inositol 1,2,4,6-tetrakisphosphate + H2O = 3-diphospho-1D-myo-inositol 1,2,4,5,6-pentakisphosphate + phosphate + 2 H(+). It catalyses the reaction 6-diphospho-1D-myo-inositol pentakisphosphate + H2O = 1D-myo-inositol hexakisphosphate + phosphate + H(+). In terms of biological role, cleaves the beta-phosphate at the 5-position of soluble inositol pyrophosphates. Has highest activity on 5-diphosphoinositol 1,2,3,4,6-pentakisphosphate (5-InsP(7)), 1,5-bis-diphosphoinositol 2,3,4,6-tetrakisphosphate (1,5-InsP(8)) and 3,5-InsP(8). Possesses phosphotyrosine phosphatase activity in vitro. Dephosphorylates the phosphoinositides PI(3,5)P2. Hydrolyzes para-nitrophenyl phosphate and O-methylfluorescein phosphate in vitro. The polypeptide is Inositol diphosphatase DSP3 (Arabidopsis thaliana (Mouse-ear cress)).